Reading from the N-terminus, the 442-residue chain is ATP-dependent protease ATPase subunit HslU (442 aa).

ATP is bound by residues isoleucine 18, 60 to 65 (GVGKTE), aspartate 255, glutamate 320, and arginine 392.

Belongs to the ClpX chaperone family. HslU subfamily. A double ring-shaped homohexamer of HslV is capped on each side by a ring-shaped HslU homohexamer. The assembly of the HslU/HslV complex is dependent on binding of ATP.

Its subcellular location is the cytoplasm. ATPase subunit of a proteasome-like degradation complex; this subunit has chaperone activity. The binding of ATP and its subsequent hydrolysis by HslU are essential for unfolding of protein substrates subsequently hydrolyzed by HslV. HslU recognizes the N-terminal part of its protein substrates and unfolds these before they are guided to HslV for hydrolysis. The polypeptide is ATP-dependent protease ATPase subunit HslU (Aeromonas hydrophila subsp. hydrophila (strain ATCC 7966 / DSM 30187 / BCRC 13018 / CCUG 14551 / JCM 1027 / KCTC 2358 / NCIMB 9240 / NCTC 8049)).